Here is a 306-residue protein sequence, read N- to C-terminus: Nucleotide-binding protein RSal33209_2275 (306 aa).

29-36 (GMSGAGRS) lines the ATP pocket. 80 to 83 (DVRG) contacts GTP.

This sequence belongs to the RapZ-like family.

Displays ATPase and GTPase activities. The chain is Nucleotide-binding protein RSal33209_2275 from Renibacterium salmoninarum (strain ATCC 33209 / DSM 20767 / JCM 11484 / NBRC 15589 / NCIMB 2235).